A 646-amino-acid chain; its full sequence is Pentatricopeptide repeat-containing protein At5g48910 (646 aa).

The tract at residues 1-24 (MNPTQTLFSPGGNSPASSPASHPS) is disordered. Residues 9–24 (SPGGNSPASSPASHPS) show a composition bias toward low complexity. PPR repeat units lie at residues 54 to 88 (DTLA…MPQR), 89 to 126 (NCFS…FVEP), 127 to 161 (NRFT…GFGG), 162 to 197 (DEFV…DMVV), 207 to 237 (EIVL…MRQR), 238 to 272 (SVVS…DIRP), 273 to 307 (NYVT…GIRI), 308 to 338 (DDVL…LPRE), 339 to 373 (NVIT…GVRP), 374 to 409 (SDVA…GLEP), and 410 to 440 (RIEH…MPIK). The type E motif stretch occupies residues 445 to 520 (IWKALLGACR…DPGCSLIDID (76 aa)). Residues 521-551 (GVLHEFVVEDDSHPKAKEINSMLVEISDKLR) form a type E(+) motif region. Residues 552–646 (LAGYRPITTQ…DGSCSCMDYW (95 aa)) form a type DYW motif region.

It belongs to the PPR family. PCMP-H subfamily.

The sequence is that of Pentatricopeptide repeat-containing protein At5g48910 (PCMP-H38) from Arabidopsis thaliana (Mouse-ear cress).